Consider the following 539-residue polypeptide: Phosphoenolpyruvate carboxykinase (ATP) (539 aa).

Arginine 61, tyrosine 195, and lysine 201 together coordinate substrate. Residues lysine 201, histidine 220, and 238–246 (GLSGTGKTT) each bind ATP. 2 residues coordinate Mn(2+): lysine 201 and histidine 220. Mn(2+) is bound at residue aspartate 259. Positions 287, 325, and 450 each coordinate ATP. Arginine 325 is a substrate binding site.

The protein belongs to the phosphoenolpyruvate carboxykinase (ATP) family. Requires Mn(2+) as cofactor.

It is found in the cytoplasm. It carries out the reaction oxaloacetate + ATP = phosphoenolpyruvate + ADP + CO2. It functions in the pathway carbohydrate biosynthesis; gluconeogenesis. In terms of biological role, involved in the gluconeogenesis. Catalyzes the conversion of oxaloacetate (OAA) to phosphoenolpyruvate (PEP) through direct phosphoryl transfer between the nucleoside triphosphate and OAA. The sequence is that of Phosphoenolpyruvate carboxykinase (ATP) from Methylobacterium radiotolerans (strain ATCC 27329 / DSM 1819 / JCM 2831 / NBRC 15690 / NCIMB 10815 / 0-1).